The chain runs to 317 residues: Transcriptional activator protein med (317 aa).

The first 17 residues, 1-17 (MITRLVMIFSVLLLLSG), serve as a signal peptide directing secretion. Cys-18 carries N-palmitoyl cysteine lipidation. Residue Cys-18 is the site of S-diacylglycerol cysteine attachment.

The protein belongs to the BMP lipoprotein family.

The protein localises to the cell membrane. Functionally, positive activator of the comK gene. This chain is Transcriptional activator protein med (med), found in Bacillus subtilis (strain 168).